The following is a 252-amino-acid chain: Protein TRANSPARENT TESTA 16 (252 aa).

One can recognise an MADS-box domain in the interval 1–61; it reads MGRGKIEIKK…GKLSEFCSEQ (61 aa). Residues 86 to 176 form the K-box domain; that stretch reads QEQLHHEMEL…YRWLHEHRAA (91 aa). A coiled-coil region spans residues 121 to 174; it reads NELDGLERQLEHSVLKVRERKNELMQQQLENLSRKRRMLEEDNNNMYRWLHEHR.

In terms of assembly, interacts with AP1/AGL7, SEP1/AGL2, SEP2/AGL4, SEP3/AGL9 and AGL3/SEP4. Expressed in buds, flowers and immature seeds, but not in roots, stems, leaves, seedlings or siliques valves. Expression in seed coat is confined to the endothelium layer.

Its subcellular location is the nucleus. Functionally, transcription factor involved in the developmental regulation of the endothelium and in the accumulation of proanthocyanidins (PAs) or condensed tannins which give the seed its brown pigmentation after oxidation. Necessary for the normal activation of the BANYULS promoter in the endothelium body. Is required, together with AGL11/STK for the maternal control of endothelium formation, which is essential for female gametophyte development and fertilization, and seed formation. Interacts genetically with AGL1/SHP1 and AGL5/SHP2 in a partially antagonistic manner and represses AGL1/SHP1, AGL5/SHP2, and AGL8/FUL during flower development. Is essential for the coordination of cell divisions in ovule, seed coat development and endosperm formation. Mediates the crosstalk between endothelium and nucellus to ensure proper seed formation. Functions redundantly with AGL63/GOA to repress nucellus growth and promote its degeneration. Represses the negative regulator of autophagy and programmed cell death HVA22D in the proximal nucellus. Binds specifically to the CArG box DNA sequence 5'-CC (A/T)6 GG-3'. The protein is Protein TRANSPARENT TESTA 16 (TT16) of Arabidopsis thaliana (Mouse-ear cress).